The following is a 97-amino-acid chain: NADH-quinone oxidoreductase subunit K (97 aa).

The next 3 helical transmembrane spans lie at 1 to 21 (MSEYLILCSILFSLGAFGVLY), 25 to 45 (ILVMFMCIELMLNSVNLLMVY), and 57 to 77 (VFVFFIMAVAAAEITIGLAIL).

It belongs to the complex I subunit 4L family. NDH-1 is composed of 14 different subunits. Subunits NuoA, H, J, K, L, M, N constitute the membrane sector of the complex.

It is found in the cell inner membrane. It catalyses the reaction a quinone + NADH + 5 H(+)(in) = a quinol + NAD(+) + 4 H(+)(out). Functionally, NDH-1 shuttles electrons from NADH, via FMN and iron-sulfur (Fe-S) centers, to quinones in the respiratory chain. The immediate electron acceptor for the enzyme in this species is believed to be a menaquinone. Couples the redox reaction to proton translocation (for every two electrons transferred, four hydrogen ions are translocated across the cytoplasmic membrane), and thus conserves the redox energy in a proton gradient. The chain is NADH-quinone oxidoreductase subunit K from Cytophaga hutchinsonii (strain ATCC 33406 / DSM 1761 / CIP 103989 / NBRC 15051 / NCIMB 9469 / D465).